The primary structure comprises 73 residues: DNA-directed RNA polymerase subunit epsilon (73 aa).

It belongs to the RNA polymerase subunit epsilon family. RNAP is composed of a core of 2 alpha, a beta and a beta' subunit. The core is associated with a delta subunit, and at least one of epsilon or omega. When a sigma factor is associated with the core the holoenzyme is formed, which can initiate transcription.

The enzyme catalyses RNA(n) + a ribonucleoside 5'-triphosphate = RNA(n+1) + diphosphate. Functionally, a non-essential component of RNA polymerase (RNAP). The polypeptide is DNA-directed RNA polymerase subunit epsilon (Lactobacillus acidophilus (strain ATCC 700396 / NCK56 / N2 / NCFM)).